A 383-amino-acid chain; its full sequence is 8-amino-7-oxononanoate synthase (383 aa).

Residue arginine 21 participates in substrate binding. Position 108-109 (108-109 (GF)) interacts with pyridoxal 5'-phosphate. Substrate is bound at residue histidine 133. 3 residues coordinate pyridoxal 5'-phosphate: serine 179, histidine 207, and threonine 233. An N6-(pyridoxal phosphate)lysine modification is found at lysine 236. Threonine 350 contributes to the substrate binding site.

Belongs to the class-II pyridoxal-phosphate-dependent aminotransferase family. BioF subfamily. As to quaternary structure, homodimer. It depends on pyridoxal 5'-phosphate as a cofactor.

It carries out the reaction 6-carboxyhexanoyl-[ACP] + L-alanine + H(+) = (8S)-8-amino-7-oxononanoate + holo-[ACP] + CO2. It participates in cofactor biosynthesis; biotin biosynthesis. In terms of biological role, catalyzes the decarboxylative condensation of pimeloyl-[acyl-carrier protein] and L-alanine to produce 8-amino-7-oxononanoate (AON), [acyl-carrier protein], and carbon dioxide. In Yersinia enterocolitica serotype O:8 / biotype 1B (strain NCTC 13174 / 8081), this protein is 8-amino-7-oxononanoate synthase.